We begin with the raw amino-acid sequence, 430 residues long: Isochorismate synthase MenF (430 aa).

Lysine 187 acts as the Proton acceptor in catalysis. Catalysis depends on glutamate 237, which acts as the Proton donor. Mg(2+)-binding residues include glutamate 281 and glutamate 414.

It belongs to the isochorismate synthase family. Requires Mg(2+) as cofactor.

It carries out the reaction chorismate = isochorismate. It participates in quinol/quinone metabolism; 1,4-dihydroxy-2-naphthoate biosynthesis; 1,4-dihydroxy-2-naphthoate from chorismate: step 1/7. The protein operates within quinol/quinone metabolism; menaquinone biosynthesis. In terms of biological role, catalyzes the conversion of chorismate to isochorismate. In Haemophilus influenzae (strain ATCC 51907 / DSM 11121 / KW20 / Rd), this protein is Isochorismate synthase MenF.